We begin with the raw amino-acid sequence, 224 residues long: Probable Brix domain-containing ribosomal biogenesis protein (224 aa).

The region spanning 1–196 (MMLITTSHRP…IWIMEDGRRW (196 aa)) is the Brix domain.

In terms of biological role, probably involved in the biogenesis of the ribosome. This Pyrococcus abyssi (strain GE5 / Orsay) protein is Probable Brix domain-containing ribosomal biogenesis protein.